The primary structure comprises 128 residues: Probable 4-amino-4-deoxy-L-arabinose-phosphoundecaprenol flippase subunit ArnF (128 aa).

Residues 1-2 lie on the Cytoplasmic side of the membrane; that stretch reads MG. The chain crosses the membrane as a helical span at residues 3 to 23; the sequence is LMWGLFSVIIASAAQLSLGFA. The Periplasmic segment spans residues 24 to 35; sequence ASHLPPMTHLWD. Residues 36–56 traverse the membrane as a helical segment; the sequence is FIAALLAFGLDARILLLGLLG. The Cytoplasmic portion of the chain corresponds to 57–76; it reads YLLSVFCWYKTLHKLALSKA. A helical transmembrane segment spans residues 77–97; the sequence is YALLSMSYVLVWIASMILPGW. Topologically, residues 98–100 are periplasmic; that stretch reads EGT. The chain crosses the membrane as a helical span at residues 101-121; the sequence is FSLKALLGVACIMSGLMLIFL. Over 122-128 the chain is Cytoplasmic; that stretch reads PTTKQRY.

This sequence belongs to the ArnF family. Heterodimer of ArnE and ArnF.

It localises to the cell inner membrane. It functions in the pathway bacterial outer membrane biogenesis; lipopolysaccharide biosynthesis. Translocates 4-amino-4-deoxy-L-arabinose-phosphoundecaprenol (alpha-L-Ara4N-phosphoundecaprenol) from the cytoplasmic to the periplasmic side of the inner membrane. The polypeptide is Probable 4-amino-4-deoxy-L-arabinose-phosphoundecaprenol flippase subunit ArnF (Escherichia coli O17:K52:H18 (strain UMN026 / ExPEC)).